The primary structure comprises 393 residues: E3 ubiquitin-protein transferase RMND5B (393 aa).

Methionine 1 is modified (N-acetylmethionine). The LisH domain maps to 116 to 148; sequence QQQILQMAIVEHLYQQGMLSVAEELCQESTLNV. The 58-residue stretch at 155–212 folds into the CTLH domain; the sequence is PFLELNRILEALHEQDLGPALEWAVSHRQRLLELNSSLEFKLHRLHFIRLLAGGPAKQ. An RING-Gid-type zinc finger spans residues 338–379; it reads CPILRQQTSDSNPPIKLICGHVISRDALNKLINGGKLKCPYC.

In terms of assembly, identified in the CTLH complex that contains GID4, RANBP9 and/or RANBP10, MKLN1, MAEA, RMND5A (or alternatively its paralog RMND5B), GID8, ARMC8, WDR26 and YPEL5. Within this complex, MAEA, RMND5A (or alternatively its paralog RMND5B), GID8, WDR26, and RANBP9 and/or RANBP10 form the catalytic core, while GID4, MKLN1, ARMC8 and YPEL5 have ancillary roles.

Its subcellular location is the cytoplasm. The protein localises to the cytosol. The catalysed reaction is S-ubiquitinyl-[E2 ubiquitin-conjugating enzyme]-L-cysteine + [acceptor protein]-L-lysine = [E2 ubiquitin-conjugating enzyme]-L-cysteine + N(6)-ubiquitinyl-[acceptor protein]-L-lysine.. Functionally, core component of the CTLH E3 ubiquitin-protein ligase complex that selectively accepts ubiquitin from UBE2H and mediates ubiquitination and subsequent proteasomal degradation of the transcription factor HBP1. MAEA and RMND5A are both required for catalytic activity of the CTLH E3 ubiquitin-protein ligase complex. Catalytic activity of the complex is required for normal cell proliferation. The CTLH E3 ubiquitin-protein ligase complex is not required for the degradation of enzymes involved in gluconeogenesis, such as FBP1. This is E3 ubiquitin-protein transferase RMND5B (RMND5B) from Homo sapiens (Human).